A 170-amino-acid chain; its full sequence is Peptide deformylase (170 aa).

Positions 91 and 133 each coordinate Fe cation. The active site involves E134. A Fe cation-binding site is contributed by H137.

It belongs to the polypeptide deformylase family. Fe(2+) serves as cofactor.

The catalysed reaction is N-terminal N-formyl-L-methionyl-[peptide] + H2O = N-terminal L-methionyl-[peptide] + formate. In terms of biological role, removes the formyl group from the N-terminal Met of newly synthesized proteins. Requires at least a dipeptide for an efficient rate of reaction. N-terminal L-methionine is a prerequisite for activity but the enzyme has broad specificity at other positions. This Yersinia pseudotuberculosis serotype O:1b (strain IP 31758) protein is Peptide deformylase.